A 208-amino-acid chain; its full sequence is LexA repressor (208 aa).

Residues 30-50 constitute a DNA-binding region (H-T-H motif); the sequence is VREICAAVKLSSTSTVHGHLA. Residues serine 129 and lysine 167 each act as for autocatalytic cleavage activity in the active site.

This sequence belongs to the peptidase S24 family. In terms of assembly, homodimer.

It catalyses the reaction Hydrolysis of Ala-|-Gly bond in repressor LexA.. Represses a number of genes involved in the response to DNA damage (SOS response), including recA and lexA. In the presence of single-stranded DNA, RecA interacts with LexA causing an autocatalytic cleavage which disrupts the DNA-binding part of LexA, leading to derepression of the SOS regulon and eventually DNA repair. This chain is LexA repressor, found in Lactobacillus helveticus (strain DPC 4571).